Consider the following 245-residue polypeptide: Methyltransferase-like protein 27 (245 aa).

The sequence is that of Methyltransferase-like protein 27 from Homo sapiens (Human).